Reading from the N-terminus, the 277-residue chain is Carbonyl reductase [NADPH] 1 (277 aa).

Ser-2 is subject to N-acetylserine. A phosphoserine mark is found at Ser-2 and Ser-30. NADP(+)-binding positions include Val-10–Val-34, Asp-63–Ile-64, and Asn-90. Residues Phe-95–Val-97 and Gln-106 each bind glutathione. A substrate-binding site is contributed by Ser-140. Ala-193–Tyr-194 provides a ligand contact to glutathione. Tyr-194 functions as the Proton acceptor in the catalytic mechanism. NADP(+)-binding positions include Tyr-194–Lys-198 and Val-231–Thr-233. An N6-1-carboxyethyl lysine modification is found at Lys-239.

It belongs to the short-chain dehydrogenases/reductases (SDR) family. In terms of assembly, monomer. As to expression, expressed in kidney (at protein level).

It localises to the cytoplasm. It carries out the reaction a secondary alcohol + NADP(+) = a ketone + NADPH + H(+). The enzyme catalyses a primary alcohol + NADP(+) = an aldehyde + NADPH + H(+). The catalysed reaction is prostaglandin F2alpha + NADP(+) = prostaglandin E2 + NADPH + H(+). It catalyses the reaction prostaglandin E1 + NADP(+) = 15-oxoprostaglandin E1 + NADPH + H(+). It carries out the reaction menadione + NADPH + H(+) = menadiol + NADP(+). The enzyme catalyses prostaglandin D2 + NADP(+) = 15-oxoprostaglandin D2 + NADPH + H(+). The catalysed reaction is prostaglandin E2 + NADP(+) = 15-oxoprostaglandin E2 + NADPH + H(+). It catalyses the reaction prostaglandin F2alpha + NADP(+) = 15-oxoprostaglandin F2alpha + NADPH + H(+). It carries out the reaction daunorubicin + NADPH + H(+) = 13-dihydrodaunorubicin + NADP(+). The enzyme catalyses S-nitrosoglutathione + NADPH + H(+) = S-(hydroxysulfenamide)glutathione + NADP(+). The catalysed reaction is cortisol + NADPH + H(+) = 20beta-dihydrocortisol + NADP(+). It catalyses the reaction corticosterone + NADPH + H(+) = 20beta-dihydrocorticosterone + NADP(+). Its activity is regulated as follows. Inhibited by quercetin, rutenin and its derivatives. In terms of biological role, NADPH-dependent reductase with broad substrate specificity. Catalyzes the reduction of a wide variety of carbonyl compounds including quinones, prostaglandins, menadione, plus various xenobiotics. Catalyzes the reduction of the antitumor anthracyclines doxorubicin and daunorubicin to the cardiotoxic compounds doxorubicinol and daunorubicinol. Can convert prostaglandin E to prostaglandin F2-alpha. Can bind glutathione, which explains its higher affinity for glutathione-conjugated substrates. Catalyzes the reduction of S-nitrosoglutathione. In addition, participates in the glucocorticoid metabolism by catalyzing the NADPH-dependent cortisol/corticosterone into 20beta-dihydrocortisol (20b-DHF) or 20beta-corticosterone (20b-DHB), which are weak agonists of NR3C1 and NR3C2 in adipose tissue. This is Carbonyl reductase [NADPH] 1 from Homo sapiens (Human).